The following is a 455-amino-acid chain: GTPase Der (455 aa).

EngA-type G domains are found at residues 4–169 (PVVA…PPKS) and 178–353 (IQLA…EQHR). GTP-binding positions include 10–17 (GRPNVGKS), 57–61 (DTGGL), 120–123 (NKCE), 184–191 (GRPNVGKS), 231–235 (DTAGI), and 296–299 (NKWD). Residues 354–439 (RRVSTSVVNE…PLKLFWRGKQ (86 aa)) enclose the KH-like domain.

This sequence belongs to the TRAFAC class TrmE-Era-EngA-EngB-Septin-like GTPase superfamily. EngA (Der) GTPase family. As to quaternary structure, associates with the 50S ribosomal subunit.

In terms of biological role, GTPase that plays an essential role in the late steps of ribosome biogenesis. The protein is GTPase Der of Synechococcus sp. (strain WH7803).